Reading from the N-terminus, the 555-residue chain is MSGSGPAMASLEPGLAGSLNRGQTDASNVPVPPHHPVPHAQTYLDELISIPKGSTPGFSFRKLWAFTGPGFLMSIAYLDPGNVESDLQCGAVAGFKLLWVLLWATVLGLLCQRLAIRLGVVTGKDLAEICYLYYPRVPRVLLWLMMEIAIIGSDMQEVIGTAIAFSLLSAGRIPLWGGVLITITDTLFFLFLDKYGLRKLEAFFGFLITIMALTFGYEYVMVRPAQTEVLKGIFLPYCPGCGREELLQAVGIVGAIIMPHNIFLHSSLVKTRAIDRSKKEEVKEANMYFLTESCLALFVSFLINLFVMAVFGEAFYHQRNEDVHNKCVNSSVSRYASIFPINNETVSVDIYQGGVILGCYFGAAALYIWAVGILAAGQSSTMTGTYAGQFVMEGFLQLRWSRFTRVLFTRSLAILPTLFVAAFRDVSQLTGMNDLLNVLQSILLPFAVLPVLTFTSLRPLMHDFANGLLGQVLMSLITGLVCAINVYFVVDFLPTLRGLGYLIPLGLLLVAYVAFVTYLLWTCSIAHGARFLARGRYNRFSFDVTADVPGLAGPH.

Over 1–63 (MSGSGPAMAS…STPGFSFRKL (63 aa)) the chain is Cytoplasmic. A helical membrane pass occupies residues 64 to 81 (WAFTGPGFLMSIAYLDPG). Topologically, residues 82-90 (NVESDLQCG) are extracellular. A helical transmembrane segment spans residues 91 to 110 (AVAGFKLLWVLLWATVLGLL). The Cytoplasmic segment spans residues 111-147 (CQRLAIRLGVVTGKDLAEICYLYYPRVPRVLLWLMME). Residues 148 to 168 (IAIIGSDMQEVIGTAIAFSLL) form a helical membrane-spanning segment. At 169–172 (SAGR) the chain is on the extracellular side. Residues 173–192 (IPLWGGVLITITDTLFFLFL) form a helical membrane-spanning segment. Over 193–201 (DKYGLRKLE) the chain is Cytoplasmic. The helical transmembrane segment at 202–222 (AFFGFLITIMALTFGYEYVMV) threads the bilayer. Residues 223-245 (RPAQTEVLKGIFLPYCPGCGREE) lie on the Extracellular side of the membrane. The helical transmembrane segment at 246–264 (LLQAVGIVGAIIMPHNIFL) threads the bilayer. Over 265-292 (HSSLVKTRAIDRSKKEEVKEANMYFLTE) the chain is Cytoplasmic. The helical transmembrane segment at 293–312 (SCLALFVSFLINLFVMAVFG) threads the bilayer. At 313 to 354 (EAFYHQRNEDVHNKCVNSSVSRYASIFPINNETVSVDIYQGG) the chain is on the extracellular side. Residues N329 and N343 are each glycosylated (N-linked (GlcNAc...) asparagine). A helical transmembrane segment spans residues 355–374 (VILGCYFGAAALYIWAVGIL). At 375 to 405 (AAGQSSTMTGTYAGQFVMEGFLQLRWSRFTR) the chain is on the cytoplasmic side. Residues 406 to 423 (VLFTRSLAILPTLFVAAF) form a helical membrane-spanning segment. The Extracellular segment spans residues 424-434 (RDVSQLTGMND). The chain crosses the membrane as a helical span at residues 435-455 (LLNVLQSILLPFAVLPVLTFT). At 456–471 (SLRPLMHDFANGLLGQ) the chain is on the cytoplasmic side. The chain crosses the membrane as a helical span at residues 472 to 493 (VLMSLITGLVCAINVYFVVDFL). At 494–501 (PTLRGLGY) the chain is on the extracellular side. The chain crosses the membrane as a helical span at residues 502 to 521 (LIPLGLLLVAYVAFVTYLLW). The Cytoplasmic portion of the chain corresponds to 522-555 (TCSIAHGARFLARGRYNRFSFDVTADVPGLAGPH).

Belongs to the NRAMP family. In terms of tissue distribution, macrophages; spleen and thymus and at lower level in liver and lung.

It is found in the late endosome membrane. Its subcellular location is the lysosome membrane. It carries out the reaction Zn(2+)(in) + H(+)(out) = Zn(2+)(out) + H(+)(in). It catalyses the reaction Fe(2+)(in) + H(+)(out) = Fe(2+)(out) + H(+)(in). The catalysed reaction is Mn(2+)(in) + H(+)(out) = Mn(2+)(out) + H(+)(in). Macrophage-specific antiporter that fluxes metal ions in either direction against a proton gradient. Localized to late endosomal lysosomal membranes, delivers bivalent cations from the cytosol into these acidic compartments where they may directly affect antimicrobial activity. Involved in iron metabolism and host natural resistance to infection with intracellular parasites. Pathogen resistance involves sequestration of Fe(2+) and Mn(2+), cofactors of both prokaryotic and eukaryotic catalases and superoxide dismutases, not only to protect the macrophage against its own generation of reactive oxygen species, but to deny the cations to the pathogen for synthesis of its protective enzymes. This Gallus gallus (Chicken) protein is Natural resistance-associated macrophage protein 1 (SLC11A1).